The following is an 827-amino-acid chain: Transcription factor SOX-6 (827 aa).

The segment covering 1–10 (MSSKQATSPF) has biased composition (polar residues). Residues 1–51 (MSSKQATSPFACTADGEEAMTQDLTSREKEEGSDQHPASHLPLHPIMHNKP) form a disordered region. Basic and acidic residues predominate over residues 25–34 (TSREKEEGSD). Thr-119 is subject to Phosphothreonine. A coiled-coil region spans residues 184-262 (LAEKERQLST…LLQQQIQVQG (79 aa)). Disordered regions lie at residues 334 to 361 (QINPRLKGISDRFGRNLDPSEHGGGHSY) and 379 to 470 (VSPG…PIGG). Residues 341 to 357 (GISDRFGRNLDPSEHGG) are compositionally biased toward basic and acidic residues. Phosphoserine is present on Ser-399. A Phosphothreonine modification is found at Thr-401. Residues Lys-404 and Lys-417 each participate in a glycyl lysine isopeptide (Lys-Gly) (interchain with G-Cter in SUMO) cross-link. Polar residues-rich tracts occupy residues 421-431 (TAQPLNLSSRP) and 439-461 (SPTSPTQNLFPASKTSPVNLPNK). Residues Ser-439 and Ser-442 each carry the phosphoserine modification. A DNA-binding region (HMG box) is located at residues 620 to 688 (IKRPMNAFMV…IHLEKYPNYK (69 aa)). Disordered stretches follow at residues 752–772 (TPSPQMTSDCSSTSASPEPSL) and 786–827 (ASLA…VSAN). Acidic residues predominate over residues 795 to 808 (NGEDEMEAYDDYED).

As to quaternary structure, homodimer. Interacts with DAZAP2. May interact with CENPK. Post-translationally, sumoylation inhibits the transcriptional activity. Highly expressed in testis.

It localises to the nucleus. It is found in the cytoplasm. Its function is as follows. Transcription factor that plays a key role in several developmental processes, including neurogenesis, chondrocytes differentiation and cartilage formation. Specifically binds the 5'-AACAAT-3' DNA motif present in enhancers and super-enhancers and promotes expression of genes important for chondrogenesis. Required for overt chondrogenesis when condensed prechondrocytes differentiate into early stage chondrocytes: SOX5 and SOX6 cooperatively bind with SOX9 on active enhancers and super-enhancers associated with cartilage-specific genes, and thereby potentiate SOX9's ability to transactivate. Not involved in precartilaginous condensation, the first step in chondrogenesis, during which skeletal progenitors differentiate into prechondrocytes. Together with SOX5, required to form and maintain a pool of highly proliferating chondroblasts between epiphyses and metaphyses, to form columnar chondroblasts, delay chondrocyte prehypertrophy but promote hypertrophy, and to delay terminal differentiation of chondrocytes on contact with ossification fronts. Binds to the proximal promoter region of the myelin protein MPZ gene, and is thereby involved in the differentiation of oligodendroglia in the developing spinal tube. Binds to the gene promoter of MBP and acts as a transcriptional repressor. This chain is Transcription factor SOX-6, found in Mus musculus (Mouse).